The sequence spans 188 residues: Elongation factor P (188 aa).

This sequence belongs to the elongation factor P family.

Its subcellular location is the cytoplasm. The protein operates within protein biosynthesis; polypeptide chain elongation. Its function is as follows. Involved in peptide bond synthesis. Stimulates efficient translation and peptide-bond synthesis on native or reconstituted 70S ribosomes in vitro. Probably functions indirectly by altering the affinity of the ribosome for aminoacyl-tRNA, thus increasing their reactivity as acceptors for peptidyl transferase. This Chlorobium phaeobacteroides (strain DSM 266 / SMG 266 / 2430) protein is Elongation factor P.